The chain runs to 569 residues: Putative diguanylate cyclase DgcQ (569 aa).

2 helical membrane-spanning segments follow: residues 25-45 (LGPG…STLL) and 365-385 (IALT…WYVI). Residues 433–568 (HPFSVIQVDL…GRNRVFASDN (136 aa)) form the GGDEF domain. D441 lines the Mg(2+) pocket. 3 residues coordinate substrate: N449, H454, and D458. E484 is a binding site for Mg(2+). E484 functions as the Proton acceptor in the catalytic mechanism.

As to quaternary structure, homodimer. Requires Mg(2+) as cofactor.

The protein localises to the cell inner membrane. The enzyme catalyses 2 GTP = 3',3'-c-di-GMP + 2 diphosphate. Its pathway is glycan metabolism; bacterial cellulose biosynthesis. It functions in the pathway purine metabolism; 3',5'-cyclic di-GMP biosynthesis. In terms of biological role, catalyzes the synthesis of cyclic-di-GMP (c-di-GMP) via the condensation of 2 GTP molecules. Cyclic-di-GMP is a second messenger which controls cell surface-associated traits in bacteria. Involved in the regulation of cellulose production. In Shigella flexneri, this protein is Putative diguanylate cyclase DgcQ.